Reading from the N-terminus, the 406-residue chain is Argininosuccinate synthase (406 aa).

Residues 14-22 (AYSGGLDTS) and alanine 41 contribute to the ATP site. Tyrosine 92 and serine 97 together coordinate L-citrulline. Residue glycine 122 participates in ATP binding. Residues threonine 124, asparagine 128, and aspartate 129 each coordinate L-aspartate. An L-citrulline-binding site is contributed by asparagine 128. 5 residues coordinate L-citrulline: arginine 132, serine 181, serine 190, glutamate 266, and tyrosine 278.

Belongs to the argininosuccinate synthase family. Type 1 subfamily. Homotetramer.

The protein localises to the cytoplasm. It catalyses the reaction L-citrulline + L-aspartate + ATP = 2-(N(omega)-L-arginino)succinate + AMP + diphosphate + H(+). The protein operates within amino-acid biosynthesis; L-arginine biosynthesis; L-arginine from L-ornithine and carbamoyl phosphate: step 2/3. The chain is Argininosuccinate synthase from Geobacter sulfurreducens (strain ATCC 51573 / DSM 12127 / PCA).